We begin with the raw amino-acid sequence, 489 residues long: Coronin-1B (489 aa).

Ser-2 bears the Phosphoserine mark. 5 WD repeats span residues 80 to 120 (GHTG…LTSP), 130 to 170 (GHTK…ELYR), 174 to 213 (LHPD…LVAE), 217 to 260 (AHEG…EPMA), and 265 to 305 (DSSN…PYIH). Positions 414 to 443 (DSRPAMAPGSSRLGAPASTTAAADATPSGS) are disordered. Residues 427–443 (GAPASTTAAADATPSGS) show a composition bias toward low complexity. Residues 449-474 (EAGKLEEVMQELRALRALVKEQGERI) adopt a coiled-coil conformation.

Belongs to the WD repeat coronin family. In terms of assembly, forms homooligomers, but does not form complexes with the other coronins. Interacts with Arp2/3 complex components, including ACTR2, ARPC1B and ARPC2. Binds actin. In terms of processing, phosphorylation on Ser-2 regulates the interaction with the Arp2/3 complex and cell motility in fibroblasts. Phosphorylation does not seem to affect subcellular location.

The protein localises to the cytoplasm. Its subcellular location is the cytoskeleton. The protein resides in the stress fiber. Its function is as follows. Regulates leading edge dynamics and cell motility in fibroblasts. May be involved in cytokinesis and signal transduction. The polypeptide is Coronin-1B (CORO1B) (Pongo abelii (Sumatran orangutan)).